The primary structure comprises 393 residues: Probable protein phosphatase 2C 68 (393 aa).

The region spanning aspartate 56–isoleucine 359 is the PPM-type phosphatase domain. Aspartate 87, glycine 88, aspartate 291, and aspartate 350 together coordinate Mn(2+).

It belongs to the PP2C family. Mg(2+) is required as a cofactor. Mn(2+) serves as cofactor.

The catalysed reaction is O-phospho-L-seryl-[protein] + H2O = L-seryl-[protein] + phosphate. It carries out the reaction O-phospho-L-threonyl-[protein] + H2O = L-threonyl-[protein] + phosphate. In terms of biological role, may dephosphorylate and repress plasma membrane H(+)-ATPases (PM H(+)-ATPases, e.g. AHA1 and AHA2), thus influencing negatively plant growth and fitness. The chain is Probable protein phosphatase 2C 68 from Arabidopsis thaliana (Mouse-ear cress).